The chain runs to 97 residues: Co-chaperonin GroES (97 aa).

The protein belongs to the GroES chaperonin family. Heptamer of 7 subunits arranged in a ring. Interacts with the chaperonin GroEL.

It is found in the cytoplasm. In terms of biological role, together with the chaperonin GroEL, plays an essential role in assisting protein folding. The GroEL-GroES system forms a nano-cage that allows encapsulation of the non-native substrate proteins and provides a physical environment optimized to promote and accelerate protein folding. GroES binds to the apical surface of the GroEL ring, thereby capping the opening of the GroEL channel. This is Co-chaperonin GroES from Burkholderia cepacia (Pseudomonas cepacia).